The primary structure comprises 43 residues: Protein PsbN (43 aa).

The chain crosses the membrane as a helical span at residues 5–27 (TLIAISISGLLVSFTGYALYTAF).

It belongs to the PsbN family.

It is found in the plastid. The protein localises to the chloroplast thylakoid membrane. May play a role in photosystem I and II biogenesis. The sequence is that of Protein PsbN from Phaseolus vulgaris (Kidney bean).